The sequence spans 215 residues: 3-dehydroquinate dehydratase (215 aa).

3-dehydroquinate-binding positions include S6, 31–33 (ELR), and R64. H111 serves as the catalytic Proton donor/acceptor. The active-site Schiff-base intermediate with substrate is the K138. The 3-dehydroquinate site is built by R174, T193, and Q197.

The protein belongs to the type-I 3-dehydroquinase family. Homodimer.

The enzyme catalyses 3-dehydroquinate = 3-dehydroshikimate + H2O. It functions in the pathway metabolic intermediate biosynthesis; chorismate biosynthesis; chorismate from D-erythrose 4-phosphate and phosphoenolpyruvate: step 3/7. In terms of biological role, involved in the third step of the chorismate pathway, which leads to the biosynthesis of aromatic amino acids. Catalyzes the cis-dehydration of 3-dehydroquinate (DHQ) and introduces the first double bond of the aromatic ring to yield 3-dehydroshikimate. This is 3-dehydroquinate dehydratase from Ignicoccus hospitalis (strain KIN4/I / DSM 18386 / JCM 14125).